The primary structure comprises 465 residues: Iron-sulfur cluster assembly SufBD family protein SAUSA300_0822 (465 aa).

This sequence belongs to the iron-sulfur cluster assembly SufBD family.

This chain is Iron-sulfur cluster assembly SufBD family protein SAUSA300_0822, found in Staphylococcus aureus (strain USA300).